A 456-amino-acid chain; its full sequence is Major facilitator superfamily domain-containing protein 10 (456 aa).

11 consecutive transmembrane segments (helical) span residues 25–45 (VVAVVFLGLLLDLLAFTLLLP), 87–107 (VLFGGLIGSVFSLLQFLSAPL), 125–145 (LAGVATSYAVWAASKSFAAFL), 149–169 (VIGGISKGNVSLCTAIVADLG), 179–199 (AVIGVAFSLGFTLGPTLGAFL), 204–224 (VPWLALLFAVSDLLFIWCFLP), 278–298 (LVYFLYLFLFSGLEFTLSFLV), 311–328 (KMFFFIGLTMATIQGAYA), 343–363 (AILLLIPASLFVGWGHTLPIL), 365–385 (LGLLLYSWAAAVVVPCLSSVV), and 422–442 (LAGARVCYTVCAALFLLPFSI).

Belongs to the major facilitator superfamily.

The protein localises to the nucleus inner membrane. Its subcellular location is the cell membrane. Functionally, probable organic anion transporter which may serve as a transporter for some non-steroidal anti-inflammatory drugs (NSAIDs) as well as other organic anions across the luminal membranes of renal proximal tubules at the final excretion step into the urine. The polypeptide is Major facilitator superfamily domain-containing protein 10 (MFSD10) (Bos taurus (Bovine)).